The following is a 196-amino-acid chain: Orotate phosphoribosyltransferase (196 aa).

5-phospho-alpha-D-ribose 1-diphosphate is bound at residue 117–125 (EDVVTTGLS). Residues Thr121 and Arg149 each coordinate orotate.

The protein belongs to the purine/pyrimidine phosphoribosyltransferase family. PyrE subfamily. In terms of assembly, homodimer. It depends on Mg(2+) as a cofactor.

The enzyme catalyses orotidine 5'-phosphate + diphosphate = orotate + 5-phospho-alpha-D-ribose 1-diphosphate. It participates in pyrimidine metabolism; UMP biosynthesis via de novo pathway; UMP from orotate: step 1/2. In terms of biological role, catalyzes the transfer of a ribosyl phosphate group from 5-phosphoribose 1-diphosphate to orotate, leading to the formation of orotidine monophosphate (OMP). This chain is Orotate phosphoribosyltransferase, found in Sphingopyxis alaskensis (strain DSM 13593 / LMG 18877 / RB2256) (Sphingomonas alaskensis).